A 319-amino-acid polypeptide reads, in one-letter code: Ribose-phosphate pyrophosphokinase (319 aa).

Residues 41–43 (DGE) and 100–101 (RQ) each bind ATP. H134 and D176 together coordinate Mg(2+). The active site involves K199. Residues R201, D225, and 229–233 (DTAGT) contribute to the D-ribose 5-phosphate site.

Belongs to the ribose-phosphate pyrophosphokinase family. Class I subfamily. As to quaternary structure, homohexamer. The cofactor is Mg(2+).

Its subcellular location is the cytoplasm. It carries out the reaction D-ribose 5-phosphate + ATP = 5-phospho-alpha-D-ribose 1-diphosphate + AMP + H(+). It functions in the pathway metabolic intermediate biosynthesis; 5-phospho-alpha-D-ribose 1-diphosphate biosynthesis; 5-phospho-alpha-D-ribose 1-diphosphate from D-ribose 5-phosphate (route I): step 1/1. Involved in the biosynthesis of the central metabolite phospho-alpha-D-ribosyl-1-pyrophosphate (PRPP) via the transfer of pyrophosphoryl group from ATP to 1-hydroxyl of ribose-5-phosphate (Rib-5-P). The protein is Ribose-phosphate pyrophosphokinase of Clostridium perfringens (strain 13 / Type A).